A 269-amino-acid chain; its full sequence is Phosphatidylglycerol--prolipoprotein diacylglyceryl transferase (269 aa).

The next 7 membrane-spanning stretches (helical) occupy residues 17 to 37, 56 to 76, 92 to 112, 120 to 140, 174 to 194, 202 to 222, and 237 to 257; these read LKIHWYGLMYLIGIGGAWLLA, LVFWLSMGVIVGGRLGYVLFY, WKGGMSFHGGFIGVMLAALWF, FFELMDFVAPLVPIGLGAGRI, PSQLYQFALEGVALFVILWLY, MAVSGMFALFYGIFRFIVEFV, and LTMGQLLCVPMIVGGLFLIWL. Arg-139 is an a 1,2-diacyl-sn-glycero-3-phospho-(1'-sn-glycerol) binding site.

Belongs to the Lgt family.

The protein localises to the cell inner membrane. The enzyme catalyses L-cysteinyl-[prolipoprotein] + a 1,2-diacyl-sn-glycero-3-phospho-(1'-sn-glycerol) = an S-1,2-diacyl-sn-glyceryl-L-cysteinyl-[prolipoprotein] + sn-glycerol 1-phosphate + H(+). The protein operates within protein modification; lipoprotein biosynthesis (diacylglyceryl transfer). Functionally, catalyzes the transfer of the diacylglyceryl group from phosphatidylglycerol to the sulfhydryl group of the N-terminal cysteine of a prolipoprotein, the first step in the formation of mature lipoproteins. The chain is Phosphatidylglycerol--prolipoprotein diacylglyceryl transferase from Pseudomonas putida (strain W619).